Reading from the N-terminus, the 1506-residue chain is Transient receptor potential cation channel subfamily M member 2 (1506 aa).

A compositionally biased stretch (basic and acidic residues) spans methionine 1–serine 11. A disordered region spans residues methionine 1–arginine 22. Topologically, residues methionine 1–glycine 750 are cytoplasmic. Residues threonine 173, asparagine 178, arginine 301, glycine 332, and threonine 335 each contribute to the ADP-D-ribose site. Phosphothreonine is present on threonine 738. Residues leucine 751–glycine 767 lie within the membrane without spanning it. Over phenylalanine 768 to proline 792 the chain is Cytoplasmic. Residues valine 793–valine 813 traverse the membrane as a helical segment. Residues leucine 814–tryptophan 824 lie on the Extracellular side of the membrane. A helical membrane pass occupies residues cysteine 825–phenylalanine 845. Ca(2+)-binding residues include glutamate 840 and glutamine 843. Residues tyrosine 846–phenylalanine 864 lie on the Cytoplasmic side of the membrane. Residues tryptophan 865–isoleucine 885 form a helical membrane-spanning segment. Position 866 (asparagine 866) interacts with Ca(2+). The Extracellular segment spans residues proline 886–arginine 893. Residues isoleucine 894 to serine 914 form a helical membrane-spanning segment. The Cytoplasmic segment spans residues lysine 915–arginine 926. The helical transmembrane segment at methionine 927–valine 947 threads the bilayer. At alanine 948–valine 967 the chain is on the extracellular side. Positions valine 968–tyrosine 982 form an intramembrane region, pore-forming. The Selectivity filter motif lies at phenylalanine 976–isoleucine 979. Topologically, residues isoleucine 983–glutamate 1019 are extracellular. Cysteine 993 and cysteine 1005 are disulfide-bonded. The helical transmembrane segment at tryptophan 1020–leucine 1041 threads the bilayer. Residues isoleucine 1042–proline 1076 lie on the Cytoplasmic side of the membrane. A Ca(2+)-binding site is contributed by glutamate 1070. Residues alanine 1077–valine 1095 lie within the membrane without spanning it. Residues leucine 1096–phenylalanine 1506 are Cytoplasmic-facing. Residues arginine 1350 to leucine 1501 form the Nudix hydrolase domain. Serine 1378 is a binding site for ADP-D-ribose. The Nudix box signature appears at glycine 1386–tryptophan 1407. 4 residues coordinate ADP-D-ribose: aspartate 1427, arginine 1429, tyrosine 1488, and asparagine 1490.

This sequence belongs to the transient receptor (TC 1.A.4) family. LTrpC subfamily. TRPM2 sub-subfamily. As to quaternary structure, homotetramer. Post-translationally, protein kinase C (PKC)-mediated phosphorylation of TRPM2 at Thr-738 counteracts the effect of cytosolic Ca(2+) and elevates the temperature threshold. In terms of tissue distribution, detected in the preoptic area of the hypothalamus, a brain area involved in body temperature control. Detected in beta-cells in pancreas islets (at protein level). Detected in brain cortex, striatum, hippocampus CA1, CA2 and CA3 layers, and in the Purkinje cell layer in cerebellum. Widely expressed, with highest levels in lung, spleen, eye and brain. Detected in dendritic cells and in polymorphonuclear neutrophils.

The protein localises to the cell membrane. It localises to the perikaryon. Its subcellular location is the cell projection. The protein resides in the cytoplasmic vesicle. It is found in the lysosome. It catalyses the reaction Ca(2+)(in) = Ca(2+)(out). The enzyme catalyses Na(+)(in) = Na(+)(out). With respect to regulation, activated by intracellular ADP-ribose, beta-NAD (NAD(+)) and similar compounds, and by oxidative stress caused by reactive oxygen or nitrogen species. Ca(2+) and PI(4,5)P2 are required for channel opening by ADP-ribose. Activated by moderate heat (35 to 40 degrees Celsius). Activation by ADP-ribose and beta-NAD is strongly increased by moderate heat (35 to 40 degrees Celsius). Likewise, reactive oxygen species lower the threshold for activation by moderate heat (37 degrees Celsius). Inactivated by exposure to extracellular pH between 4.0 and 6.5; irreversibly inactivated when open channels are exposed to extracellular pH between 4.0 and 6.5, while pre-exposure of closed channels to extracellular pH 5.5 gives rise to currents that rapidly inactivate, but protects against irreversible inactivation. Inactivated by intracellular ATP. Activated by arachidonic acid. Inhibited by 2-aminoethyl diphenylborinate (2-APB). Nonselective, voltage-independent cation channel that mediates Na(+) and Ca(2+) influx, leading to increased cytoplasmic Ca(2+) levels. Functions as a ligand-gated ion channel, gated by intracellular adenosine diphosphate ribose (ADP-ribose), Ca(2+), warm temperature, and oxidative stress. The precise physiological activators are under debate; the true, physiological activators may be ADP-ribose and ADP-ribose-2'-phosphate. Binding of ADP-ribose to the cytoplasmic Nudix domain causes a conformation change; the channel is primed but still requires Ca(2+) binding to trigger channel opening. Extracellular Ca(2+) passes through the channel and increases channel activity. Also contributes to Ca(2+) release from intracellular stores in response to ADP-ribose. Plays a role in numerous processes that involve signaling via intracellular Ca(2+) levels. Besides, mediates the release of lysosomal Zn(2+) stores in response to reactive oxygen species, leading to increased cytosolic Zn(2+) levels. Plays a role in mediating behavorial and physiological responses to moderate heat and thereby contributes to body temperature homeostasis. Plays a role in insulin secretion, a process that requires increased cytoplasmic Ca(2+) levels. Required for normal IFNG and cytokine secretion and normal innate immune immunity in response to bacterial infection. Required for normal phagocytosis and cytokine release by macrophages exposed to zymosan (in vitro). Plays a role in dendritic cell differentiation and maturation, and in dendritic cell chemotaxis via its role in regulating cytoplasmic Ca(2+) levels. Plays a role in the regulation of the reorganization of the actin cytoskeleton and filopodia formation in response to reactive oxygen species via its function in increasing cytoplasmic Ca(2+) and Zn(2+) levels. Confers susceptibility to cell death following oxidative stress. The sequence is that of Transient receptor potential cation channel subfamily M member 2 (Trpm2) from Mus musculus (Mouse).